The chain runs to 211 residues: MSTDLRSRVLTEHNVSRETAQALDLYVAQLTRWQTVKNLVGPATLSEVWQRHVADALQLLTIAPEARRWLDLGSGAGIPGLILAIAGRGRSGFHVELVESNARKCAFLSETARLTGAPVTVHNARIEAVIGHRSGIDIVCARALAPLTQLLAWSEPLLTSGTVGLFPKGRDAAAELTEAEDAWTFTRDLIPSRTDSQARIVRVTSLSRVDP.

S-adenosyl-L-methionine-binding positions include glycine 73, 126–127 (IE), and arginine 142.

This sequence belongs to the methyltransferase superfamily. RNA methyltransferase RsmG family.

Its subcellular location is the cytoplasm. It catalyses the reaction guanosine(527) in 16S rRNA + S-adenosyl-L-methionine = N(7)-methylguanosine(527) in 16S rRNA + S-adenosyl-L-homocysteine. In terms of biological role, specifically methylates the N7 position of guanine in position 527 of 16S rRNA. The sequence is that of Ribosomal RNA small subunit methyltransferase G from Methylorubrum populi (strain ATCC BAA-705 / NCIMB 13946 / BJ001) (Methylobacterium populi).